The chain runs to 268 residues: Inositol polyphosphate multikinase (268 aa).

Residues lysine 27, glutamate 86–isoleucine 88, and aspartate 99 each bind ATP. Threonine 127–isoleucine 135 lines the substrate pocket. Aspartate 235 lines the ATP pocket.

Belongs to the inositol phosphokinase (IPK) family.

The protein resides in the cytoplasm. The protein localises to the nucleus. It carries out the reaction 1D-myo-inositol 1,4,5-trisphosphate + 2 ATP = 1D-myo-inositol 1,3,4,5,6-pentakisphosphate + 2 ADP + 2 H(+). The catalysed reaction is 1D-myo-inositol 1,4,5-trisphosphate + ATP = 1D-myo-inositol 1,4,5,6-tetrakisphosphate + ADP + H(+). The enzyme catalyses 1D-myo-inositol 1,4,5-trisphosphate + ATP = 1D-myo-inositol 1,3,4,5-tetrakisphosphate + ADP + H(+). It catalyses the reaction 1D-myo-inositol 1,4,5,6-tetrakisphosphate + ATP = 1D-myo-inositol 1,3,4,5,6-pentakisphosphate + ADP + H(+). In terms of biological role, inositol phosphate kinase with both monophosphoinositol and diphosphoinositol polyphosphate synthase activities. Able to phosphorylate inositol 1,4,5-trisphosphate (Ins(1,4,5)P3) on both the carbon-3 and carbon-6 positions to synthesize inositol 1,3,4,5-tetrakisphosphate (Ins(1,3,4,5)P4) and inositol 1,4,5,6-tetrakisphosphate (Ins(1,4,5,6)P4), and then to subsequently phosphorylate and convert either isomer of InsP4 to inositol 1,3,4,5,6-pentakisphosphate (Ins(1,3,4,5,6)P5). Also converts (Ins(1,3,4,5,6)P5) to InsP6. Also has a role in transcription regulation. The catalytic activity is required for PHO gene repression by phosphate and for NCR gene activation in response to nitrogen availability, indicating a role for inositol pyrophosphates in these controls. Inositol polyphosphates may be involved in the regulation of chromatin remodeling of transcription. This chain is Inositol polyphosphate multikinase (arg82), found in Schizosaccharomyces pombe (strain 972 / ATCC 24843) (Fission yeast).